The following is a 342-amino-acid chain: Biotin synthase (342 aa).

The Radical SAM core domain maps to asparagine 55–lysine 274. [4Fe-4S] cluster is bound by residues cysteine 70, cysteine 74, and cysteine 77. [2Fe-2S] cluster is bound by residues cysteine 114, cysteine 145, cysteine 205, and arginine 278.

Belongs to the radical SAM superfamily. Biotin synthase family. In terms of assembly, homodimer. The cofactor is [4Fe-4S] cluster. It depends on [2Fe-2S] cluster as a cofactor.

The enzyme catalyses (4R,5S)-dethiobiotin + (sulfur carrier)-SH + 2 reduced [2Fe-2S]-[ferredoxin] + 2 S-adenosyl-L-methionine = (sulfur carrier)-H + biotin + 2 5'-deoxyadenosine + 2 L-methionine + 2 oxidized [2Fe-2S]-[ferredoxin]. Its pathway is cofactor biosynthesis; biotin biosynthesis; biotin from 7,8-diaminononanoate: step 2/2. Catalyzes the conversion of dethiobiotin (DTB) to biotin by the insertion of a sulfur atom into dethiobiotin via a radical-based mechanism. The protein is Biotin synthase of Rhodopseudomonas palustris (strain BisB5).